Consider the following 72-residue polypeptide: Penaeidin-2d (72 aa).

A signal peptide spans 1–21 (MRLVVCLVFLASFALVCQGGA). Q22 carries the pyrrolidone carboxylic acid modification. 3 disulfides stabilise this stretch: C45–C59, C48–C66, and C60–C67. Residue K71 is modified to Lysine amide.

Belongs to the penaeidin family.

It is found in the cytoplasmic granule. Functionally, antibacterial and antifungal activity. Presents chitin-binding activity. This chain is Penaeidin-2d, found in Penaeus setiferus (Atlantic white shrimp).